Reading from the N-terminus, the 243-residue chain is Carboxy-S-adenosyl-L-methionine synthase (243 aa).

S-adenosyl-L-methionine-binding positions include tyrosine 40, 65–67 (GCS), 90–91 (DN), 118–119 (DI), asparagine 133, and arginine 200.

This sequence belongs to the class I-like SAM-binding methyltransferase superfamily. Cx-SAM synthase family. In terms of assembly, homodimer.

The catalysed reaction is prephenate + S-adenosyl-L-methionine = carboxy-S-adenosyl-L-methionine + 3-phenylpyruvate + H2O. Catalyzes the conversion of S-adenosyl-L-methionine (SAM) to carboxy-S-adenosyl-L-methionine (Cx-SAM). This is Carboxy-S-adenosyl-L-methionine synthase from Shewanella putrefaciens (strain CN-32 / ATCC BAA-453).